A 424-amino-acid polypeptide reads, in one-letter code: Arginine ADP-riboxanase OspC4 (424 aa).

His-85, Gln-86, Ser-87, Leu-91, Ile-104, Asn-114, Phe-130, His-148, Phe-153, Asp-173, and Glu-268 together coordinate NAD(+). Glu-268 is a catalytic residue. ANK repeat units follow at residues 311-340 (MAHQALAYSLGNKKADIALYLLSKFNFTKQ), 355-386 (NLYDVEYLLSKDGANYKVLEYFINNGLVDVNK), and 393-422 (SGDTMLDNAMKSKDSKMIDFFIKKWSGIRQ).

It belongs to the OspC family.

The protein localises to the secreted. The protein resides in the host cytoplasm. It catalyses the reaction L-arginyl-[protein] + NAD(+) = ADP-riboxanated L-argininyl-[protein] + nicotinamide + NH4(+) + H(+). Its function is as follows. ADP-riboxanase effector that mediates arginine ADP-riboxanation of host caspase CASP4/CASP11, thereby inhibiting pyroptosis. The chain is Arginine ADP-riboxanase OspC4 from Shigella flexneri.